The following is a 93-amino-acid chain: DNA-directed RNA polymerase subunit omega (93 aa).

The protein belongs to the RNA polymerase subunit omega family. As to quaternary structure, the RNAP catalytic core consists of 2 alpha, 1 beta, 1 beta' and 1 omega subunit. When a sigma factor is associated with the core the holoenzyme is formed, which can initiate transcription.

It carries out the reaction RNA(n) + a ribonucleoside 5'-triphosphate = RNA(n+1) + diphosphate. Promotes RNA polymerase assembly. Latches the N- and C-terminal regions of the beta' subunit thereby facilitating its interaction with the beta and alpha subunits. The protein is DNA-directed RNA polymerase subunit omega of Corynebacterium urealyticum (strain ATCC 43042 / DSM 7109).